The primary structure comprises 1094 residues: Probable arabinosyltransferase C (1094 aa).

The next 13 helical transmembrane spans lie at 28–50, 232–251, 264–286, 341–360, 373–392, 431–453, 466–488, 530–552, 565–582, 586–608, 620–642, 657–679, and 700–722; these read IARY…TPLL, AAMI…LHIL, PARW…WWHF, SIWM…WVIS, TSRA…WLPL, IGAL…LVAI, RFGV…IPIF, SIAR…AMSL, SRRI…MMFT, WTHH…AVAV, TVFA…GWWY, WRWS…AAWF, and LAGI…EVVS. A compositionally biased stretch (low complexity) spans 817-831; that stretch reads GSEPGTEGGTTAAPG. Residues 817-836 are disordered; sequence GSEPGTEGGTTAAPGINGSR.

It belongs to the emb family.

The protein localises to the cell membrane. In terms of biological role, arabinosyl transferase responsible for the polymerization of arabinose into the arabinan of arabinogalactan. The sequence is that of Probable arabinosyltransferase C (embC) from Mycobacterium tuberculosis (strain ATCC 25618 / H37Rv).